Here is a 276-residue protein sequence, read N- to C-terminus: MGAPLVALNDGNSIPQVGLGVWQTPPEDTERAVAAALAAGYRHVDTAAAYGNEEQTGRAIAQSGLDRSQVYLVTKLWNSEQGYDATLAAFEASVDRLGVDYLDLYLIHWPVPEKNLFVDTFKAFARLREDGRIRSIGVSNFEPEHLRVLIDSTGIVPAVNQIELHPLLPQRELRELHAQLGIATEAWSPLGQGSLLAHPTVTGVAESHGKTAAQALIRWHMQLGNIVIPKSVNPQRIESNFDVFDFELSEQDMASISSLEDGSRLGPDPKTFNFTG.

The Proton donor role is filled by Tyr-50. 8 residues coordinate NADPH: Leu-190, Ile-228, Lys-230, Ser-231, Val-232, Arg-236, Ser-239, and Asn-240. A disordered region spans residues 257-276; sequence SSLEDGSRLGPDPKTFNFTG.

It belongs to the aldo/keto reductase family.

In Mycobacterium sp. (strain KMS), this protein is Aldo-keto reductase Mkms_1985.